Consider the following 807-residue polypeptide: Leucine--tRNA ligase (807 aa).

Residues 40-51 (PYPSGQGLHVGH) carry the 'HIGH' region motif. A 'KMSKS' region motif is present at residues 575–579 (KMSKS). Lys-578 is an ATP binding site.

It belongs to the class-I aminoacyl-tRNA synthetase family.

The protein localises to the cytoplasm. The enzyme catalyses tRNA(Leu) + L-leucine + ATP = L-leucyl-tRNA(Leu) + AMP + diphosphate. The protein is Leucine--tRNA ligase of Latilactobacillus sakei subsp. sakei (strain 23K) (Lactobacillus sakei subsp. sakei).